A 516-amino-acid polypeptide reads, in one-letter code: Delta(24)-sterol reductase (516 aa).

The N-terminal stretch at 1 to 22 is a signal peptide; the sequence is MEPAVSLAVCALLFLLWVRVKG. Residues 23-31 lie on the Lumenal side of the membrane; that stretch reads LEFVLIHQR. The chain crosses the membrane as a helical span at residues 32 to 52; it reads WVFVCLFLLPLSLIFDIYYYV. Residues 53–516 lie on the Cytoplasmic side of the membrane; it reads RAWVVFKLSS…YDKICKAARH (464 aa). Positions 58-234 constitute an FAD-binding PCMH-type domain; the sequence is FKLSSAPRLH…VAAEIRIIPA (177 aa). Residue 163–175 coordinates FAD; that stretch reads TVGGLIMGTGIES.

It belongs to the FAD-binding oxidoreductase/transferase type 4 family. It depends on FAD as a cofactor.

The protein resides in the endoplasmic reticulum membrane. It is found in the golgi apparatus membrane. The enzyme catalyses 5alpha-cholest-8-en-3beta-ol + NADP(+) = zymosterol + NADPH + H(+). It catalyses the reaction cholesterol + NADP(+) = desmosterol + NADPH + H(+). It carries out the reaction lanosterol + NADPH + H(+) = 24,25-dihydrolanosterol + NADP(+). The protein operates within steroid biosynthesis; cholesterol biosynthesis. Its function is as follows. Catalyzes the reduction of the delta-24 double bond of sterol intermediates during cholesterol biosynthesis. In addition to its cholesterol-synthesizing activity, can protect cells from oxidative stress by reducing caspase 3 activity during apoptosis induced by oxidative stress. Also protects against amyloid-beta peptide-induced apoptosis. This is Delta(24)-sterol reductase (Dhcr24) from Mus musculus (Mouse).